A 151-amino-acid chain; its full sequence is Macrodomain Ter protein (151 aa).

The protein belongs to the MatP family. Homodimer.

Its subcellular location is the cytoplasm. Required for spatial organization of the terminus region of the chromosome (Ter macrodomain) during the cell cycle. Prevents early segregation of duplicated Ter macrodomains during cell division. Binds specifically to matS, which is a 13 bp signature motif repeated within the Ter macrodomain. This is Macrodomain Ter protein from Yersinia enterocolitica serotype O:8 / biotype 1B (strain NCTC 13174 / 8081).